The primary structure comprises 100 residues: MNLSPREKDKLLISMAAMVARRRLERGVRLNHPEAIAIISDFIVEGARDGRTVAELMQAGAEVLTREQCMDGIAEMIHDIQVEATFPDGTKLVTVHQPIR.

It belongs to the urease gamma subunit family. Heterotrimer of UreA (gamma), UreB (beta) and UreC (alpha) subunits. Three heterotrimers associate to form the active enzyme.

The protein resides in the cytoplasm. The enzyme catalyses urea + 2 H2O + H(+) = hydrogencarbonate + 2 NH4(+). It functions in the pathway nitrogen metabolism; urea degradation; CO(2) and NH(3) from urea (urease route): step 1/1. The protein is Urease subunit gamma of Rhodopseudomonas palustris (strain BisB5).